Here is a 389-residue protein sequence, read N- to C-terminus: Altered inheritance of mitochondria protein 6 (389 aa).

Positions 1–23 (MMLLSQPGIWLLVSLFLCSSVNS) are cleaved as a signal peptide.

Belongs to the AIM6 family.

This Eremothecium gossypii (strain ATCC 10895 / CBS 109.51 / FGSC 9923 / NRRL Y-1056) (Yeast) protein is Altered inheritance of mitochondria protein 6 (AIM6).